A 66-amino-acid chain; its full sequence is Large ribosomal subunit protein bL33 (66 aa).

This sequence belongs to the bacterial ribosomal protein bL33 family.

The polypeptide is Large ribosomal subunit protein bL33 (Synechococcus sp. (strain CC9311)).